A 27-amino-acid polypeptide reads, in one-letter code: Caerulein precursor fragment R1 (27 aa).

As to expression, expressed by the skin glands.

It is found in the secreted. Antimicrobial peptide. This is Caerulein precursor fragment R1 from Xenopus ruwenzoriensis (Uganda clawed frog).